Here is a 110-residue protein sequence, read N- to C-terminus: Cytochrome c oxidase subunit 4B (110 aa).

3 helical membrane-spanning segments follow: residues 29 to 49, 55 to 75, and 89 to 109; these read MIAF…VGYE, FVVP…LYYF, and FIYG…TVVW.

The protein belongs to the cytochrome c oxidase bacterial subunit 4 family.

It localises to the cell membrane. It carries out the reaction 4 Fe(II)-[cytochrome c] + O2 + 8 H(+)(in) = 4 Fe(III)-[cytochrome c] + 2 H2O + 4 H(+)(out). The polypeptide is Cytochrome c oxidase subunit 4B (caaD) (Bacillus sp. (strain PS3)).